The primary structure comprises 371 residues: Zinc finger CCCH domain-containing protein 21 (371 aa).

A disordered region spans residues 1–64 (MPPKQQPKAD…AAKKKKEEEK (64 aa)). Basic and acidic residues predominate over residues 10 to 23 (DLAKKQKQVEDKTF). A compositionally biased stretch (polar residues) spans 34 to 46 (VQKYVQSLKQSVQ). C3H1-type zinc fingers lie at residues 88-115 (DPKSILCEFFKAGQCQKGFKCKFSHDLN) and 159-197 (KPTDIVCKYFLDAVEKKQYGWFWSCPNGGKECHYRHALP). Coiled-coil stretches lie at residues 205-237 (QMKALLEEESSKKLAVEDEIENERAKLQTATQM) and 283-317 (FVDDAEACEEYEREREQEETEQKAKNKEAEAGTSK). Residues 290 to 371 (CEEYEREREQ…IREPNDEGSS (82 aa)) form a disordered region. Basic and acidic residues predominate over residues 292–312 (EYEREREQEETEQKAKNKEAE). Over residues 330-352 (NEEEEDDDDDDDDLDMDELDELE) the composition is skewed to acidic residues.

In Arabidopsis thaliana (Mouse-ear cress), this protein is Zinc finger CCCH domain-containing protein 21.